Here is a 324-residue protein sequence, read N- to C-terminus: Galactosylgalactosylxylosylprotein 3-beta-glucuronosyltransferase 2 (324 aa).

Residues 1–2 (MK) are Cytoplasmic-facing. A helical; Signal-anchor for type II membrane protein transmembrane segment spans residues 3 to 23 (SALCNRFFILLPWILIVIIML). Residues 24 to 324 (DVDPRRPAPQ…YHMDTVNIEV (301 aa)) lie on the Lumenal side of the membrane. The disordered stretch occupies residues 34-78 (LTSRPYFSPHTVGCGGSRVPLRRSSPGRDAAEKRNESRPQLQPEP). Residue N68 is glycosylated (N-linked (GlcNAc...) asparagine). Position 188 (D188) interacts with Mn(2+). The Proton acceptor role is filled by E274. N293 is a glycosylation site (N-linked (GlcNAc...) asparagine).

It belongs to the glycosyltransferase 43 family. As to quaternary structure, homodimer. Mn(2+) is required as a cofactor. Expressed in the cerebral cortex, cerebellum and whole brain.

Its subcellular location is the golgi apparatus membrane. It catalyses the reaction 3-O-(beta-D-galactosyl-(1-&gt;3)-beta-D-galactosyl-(1-&gt;4)-beta-D-xylosyl)-L-seryl-[protein] + UDP-alpha-D-glucuronate = 3-O-(beta-D-GlcA-(1-&gt;3)-beta-D-Gal-(1-&gt;3)-beta-D-Gal-(1-&gt;4)-beta-D-Xyl)-L-seryl-[protein] + UDP + H(+). It participates in protein modification; protein glycosylation. In terms of biological role, involved in the biosynthesis of L2/HNK-1 carbohydrate epitope on both glycolipids and glycoproteins. Substrates include asialo-orosomucoid (ASOR), paragloboside (lacto-N-neotetraosylceramide), Gal-beta-1,4-GlcNAc-beta-1,3-Gal-beta-1,4-Glc-pyridylamine and Gal-beta-1,3-GlcNAc-beta-1,3-Gal-beta-1,4-Glc-pyridylamine. This Rattus norvegicus (Rat) protein is Galactosylgalactosylxylosylprotein 3-beta-glucuronosyltransferase 2 (B3gat2).